A 527-amino-acid chain; its full sequence is Bifunctional purine biosynthesis protein PurH (527 aa).

The MGS-like domain occupies 8 to 156 (AGAKRPIRRA…KNHPSVAVVV (149 aa)).

It belongs to the PurH family.

The enzyme catalyses (6R)-10-formyltetrahydrofolate + 5-amino-1-(5-phospho-beta-D-ribosyl)imidazole-4-carboxamide = 5-formamido-1-(5-phospho-D-ribosyl)imidazole-4-carboxamide + (6S)-5,6,7,8-tetrahydrofolate. It carries out the reaction IMP + H2O = 5-formamido-1-(5-phospho-D-ribosyl)imidazole-4-carboxamide. The protein operates within purine metabolism; IMP biosynthesis via de novo pathway; 5-formamido-1-(5-phospho-D-ribosyl)imidazole-4-carboxamide from 5-amino-1-(5-phospho-D-ribosyl)imidazole-4-carboxamide (10-formyl THF route): step 1/1. Its pathway is purine metabolism; IMP biosynthesis via de novo pathway; IMP from 5-formamido-1-(5-phospho-D-ribosyl)imidazole-4-carboxamide: step 1/1. This Mycobacterium sp. (strain KMS) protein is Bifunctional purine biosynthesis protein PurH.